The sequence spans 1099 residues: Glutamine--fructose-6-phosphate aminotransferase [isomerizing] (1099 aa).

The Nucleophile; for GATase activity role is filled by Cys2. The Glutamine amidotransferase type-2; first part domain occupies Cys2 to His71. The 56-residue stretch at Leu198–Ile253 folds into the HTH cro/C1-type domain. Positions Ile278–Ile413 constitute a DOD-type homing endonuclease domain. A Glutamine amidotransferase type-2; second part domain is found at Ser571–Lys723. SIS domains lie at Leu786 to Arg923 and Thr948 to Pro1089. Lys1094 serves as the catalytic For Fru-6P isomerization activity.

The protein in the C-terminal section; belongs to the SIS family. GFAT subfamily. In terms of assembly, homodimer. In terms of processing, this protein undergoes a protein self splicing that involves a post-translational excision of the intervening region (intein) followed by peptide ligation.

Its subcellular location is the cytoplasm. The enzyme catalyses D-fructose 6-phosphate + L-glutamine = D-glucosamine 6-phosphate + L-glutamate. Its function is as follows. Catalyzes the first step in hexosamine metabolism, converting fructose-6P into glucosamine-6P using glutamine as a nitrogen source. This chain is Glutamine--fructose-6-phosphate aminotransferase [isomerizing] (glmS), found in Methanocaldococcus jannaschii (strain ATCC 43067 / DSM 2661 / JAL-1 / JCM 10045 / NBRC 100440) (Methanococcus jannaschii).